Reading from the N-terminus, the 209-residue chain is Outer-membrane lipoprotein carrier protein (209 aa).

The signal sequence occupies residues 1–22 (MKKLLLTLAMVPAVLFSPTAWG).

This sequence belongs to the LolA family. Monomer.

Its subcellular location is the periplasm. Its function is as follows. Participates in the translocation of lipoproteins from the inner membrane to the outer membrane. Only forms a complex with a lipoprotein if the residue after the N-terminal Cys is not an aspartate (The Asp acts as a targeting signal to indicate that the lipoprotein should stay in the inner membrane). This Alcanivorax borkumensis (strain ATCC 700651 / DSM 11573 / NCIMB 13689 / SK2) protein is Outer-membrane lipoprotein carrier protein.